The following is a 647-amino-acid chain: DNA mismatch repair protein MutL (647 aa).

This sequence belongs to the DNA mismatch repair MutL/HexB family.

Its function is as follows. This protein is involved in the repair of mismatches in DNA. It is required for dam-dependent methyl-directed DNA mismatch repair. May act as a 'molecular matchmaker', a protein that promotes the formation of a stable complex between two or more DNA-binding proteins in an ATP-dependent manner without itself being part of a final effector complex. In Bacillus thuringiensis subsp. konkukian (strain 97-27), this protein is DNA mismatch repair protein MutL.